The chain runs to 334 residues: Small ribosomal subunit protein RACK1z (334 aa).

7 WD repeats span residues 16 to 47, 73 to 103, 115 to 145, 163 to 195, 207 to 237, 248 to 277, and 296 to 326; these read GHND…LVWD, GHSH…RLWD, GHDK…KLWN, GHNG…KVWN, GHGG…LLWD, DAGS…KIWD, and NQML…RIYK.

This sequence belongs to the WD repeat G protein beta family. Ribosomal protein RACK1 subfamily. As to quaternary structure, interacts with RAC1, RAC3, RAC6, RAR1, SGT1 and RBOHB. Homodimer and heterodimer with RACK1B. In terms of tissue distribution, widely expressed.

It is found in the cytoplasm. Its subcellular location is the cell membrane. Its function is as follows. Component of the RACK1 regulatory proteins that functions in innate immunity by interacting with multiple proteins in the RAC1 immune complex. Acts as a positive regulator of reactive oxygen species (ROS) production and is required for resistance against rice blast (M.grisea) infection. The sequence is that of Small ribosomal subunit protein RACK1z (RACK1A) from Oryza sativa subsp. japonica (Rice).